The primary structure comprises 444 residues: Trigger factor (444 aa).

One can recognise a PPIase FKBP-type domain in the interval 160-245 (DMQVTFDFEG…VKQVEKPKLP (86 aa)).

Belongs to the FKBP-type PPIase family. Tig subfamily.

The protein localises to the cytoplasm. It catalyses the reaction [protein]-peptidylproline (omega=180) = [protein]-peptidylproline (omega=0). Involved in protein export. Acts as a chaperone by maintaining the newly synthesized protein in an open conformation. Functions as a peptidyl-prolyl cis-trans isomerase. This Acinetobacter baumannii (strain AB0057) protein is Trigger factor.